A 124-amino-acid chain; its full sequence is MRHYEIVFIVHPDQSEQVPAMIERYKGMVLAAEGKIHRLEDWGRRQLAYPIQKLHKAHYVLMNVECQAETLAEIEHAFKFNDAVLRHLTIKMDRAISDASPMMKDEKAKNLLDAQPAAEVEASA.

It belongs to the bacterial ribosomal protein bS6 family.

Its function is as follows. Binds together with bS18 to 16S ribosomal RNA. In Chromobacterium violaceum (strain ATCC 12472 / DSM 30191 / JCM 1249 / CCUG 213 / NBRC 12614 / NCIMB 9131 / NCTC 9757 / MK), this protein is Small ribosomal subunit protein bS6.